The chain runs to 283 residues: Release factor glutamine methyltransferase (283 aa).

S-adenosyl-L-methionine contacts are provided by residues glycine 121–glycine 125, aspartate 144, and asparagine 188. Asparagine 188–tyrosine 191 contacts substrate.

Belongs to the protein N5-glutamine methyltransferase family. PrmC subfamily.

It catalyses the reaction L-glutaminyl-[peptide chain release factor] + S-adenosyl-L-methionine = N(5)-methyl-L-glutaminyl-[peptide chain release factor] + S-adenosyl-L-homocysteine + H(+). Functionally, methylates the class 1 translation termination release factors RF1/PrfA and RF2/PrfB on the glutamine residue of the universally conserved GGQ motif. In Bacillus anthracis, this protein is Release factor glutamine methyltransferase.